The primary structure comprises 487 residues: NAD-dependent histone deacetylase HST3 (487 aa).

Residues proline 15–glutamate 336 form the Deacetylase sirtuin-type domain. NAD(+) contacts are provided by residues glycine 40–tyrosine 59 and glutamine 129–aspartate 132. Histidine 167 (proton acceptor) is an active-site residue. The Zn(2+) site is built by cysteine 175, cysteine 178, cysteine 200, and cysteine 203. Residues glycine 261–serine 263, asparagine 291–threonine 293, and cysteine 312 each bind NAD(+). Positions valine 397–proline 406 are enriched in basic and acidic residues. The segment at valine 397–histidine 487 is disordered. A compositionally biased stretch (basic residues) spans histidine 415–arginine 425. The span at aspartate 448 to glycine 459 shows a compositional bias: polar residues.

This sequence belongs to the sirtuin family. Class I subfamily. The cofactor is Zn(2+).

It is found in the cytoplasm. Its subcellular location is the nucleus. The catalysed reaction is N(6)-acetyl-L-lysyl-[protein] + NAD(+) + H2O = 2''-O-acetyl-ADP-D-ribose + nicotinamide + L-lysyl-[protein]. Functionally, NAD-dependent histone deacetylase, which could function in telomeric silencing, cell cycle progression and chromosome stability. This is NAD-dependent histone deacetylase HST3 (HST3) from Candida albicans (strain SC5314 / ATCC MYA-2876) (Yeast).